Reading from the N-terminus, the 524-residue chain is 56 kDa type-specific antigen (524 aa).

An N-terminal signal peptide occupies residues 1–22 (MKKIMLIASAMSALSLPFSASA). Residues 67 to 87 (LTTGLPFGGTLAAGMTIAPGF) traverse the membrane as a helical segment. Disordered regions lie at residues 112–132 (SKGE…RKRF) and 387–422 (EKLA…KGKE). 2 stretches are compositionally biased toward basic and acidic residues: residues 395-405 (EDAKNQGEGDC) and 413-422 (EKSKEGKGKE). A helical membrane pass occupies residues 472–492 (TGMVASGALGVAINAAEGVYV).

It is found in the cell membrane. In terms of biological role, may be an adherent factor for rickettsial adsorption to the host-cell surface and a determinant of virulence of individual rickettsial strain. It is the major outer membrane protein. This Orientia tsutsugamushi (Rickettsia tsutsugamushi) protein is 56 kDa type-specific antigen.